A 353-amino-acid polypeptide reads, in one-letter code: Alcohol dehydrogenase 1 (353 aa).

Zn(2+)-binding residues include Cys-47, His-70, Cys-101, Cys-104, Cys-107, Cys-115, and Cys-157. Residues 181-187 (GAGGGLG), Asp-205, Lys-210, 274-276 (IGL), and Arg-346 contribute to the NAD(+) site.

This sequence belongs to the zinc-containing alcohol dehydrogenase family. Homotetramer. Zn(2+) is required as a cofactor.

Its subcellular location is the cytoplasm. It carries out the reaction a primary alcohol + NAD(+) = an aldehyde + NADH + H(+). The catalysed reaction is a secondary alcohol + NAD(+) = a ketone + NADH + H(+). The sequence is that of Alcohol dehydrogenase 1 (adh-1) from Neurospora crassa (strain ATCC 24698 / 74-OR23-1A / CBS 708.71 / DSM 1257 / FGSC 987).